Here is a 352-residue protein sequence, read N- to C-terminus: C-C chemokine receptor type 5 (352 aa).

The Extracellular portion of the chain corresponds to 1 to 30; the sequence is MDYQVSSPIYDIDYGPSEPCRKIDVKQMGA. The residue at position 3 (Tyr-3) is a Sulfotyrosine. Ser-6 and Ser-7 each carry an O-linked (GalNAc...) serine glycan. Sulfotyrosine is present on residues Tyr-10 and Tyr-14. 2 disulfides stabilise this stretch: Cys-20/Cys-269 and Cys-101/Cys-178. A helical membrane pass occupies residues 31–58; sequence HLLPPLYSMVFLFGFVGNMLVVLILINC. Over 59–68 the chain is Cytoplasmic; that stretch reads KRLKSMTDIY. The chain crosses the membrane as a helical span at residues 69–89; it reads LLNLAISDLIFLFTVPFWAHY. Residues 90–102 lie on the Extracellular side of the membrane; it reads AAGQWDFGNTMCQ. The chain crosses the membrane as a helical span at residues 103-124; the sequence is FLTGLYFIGFFSGIFFIILLTI. Topologically, residues 125 to 141 are cytoplasmic; sequence DRYLAIVHAVFALKART. Residues 142 to 166 form a helical membrane-spanning segment; it reads VTFGVVTSVITWVVAVFASLPGIIF. Topologically, residues 167-198 are extracellular; sequence TRSQKEGYHYTCSPHFPFSQYQFWKNFETLKM. The helical transmembrane segment at 199 to 218 threads the bilayer; the sequence is VILGLVLPLLVMVICYSGIL. The Cytoplasmic portion of the chain corresponds to 219 to 235; sequence KTLLRCRNEKKRHRAVR. The chain crosses the membrane as a helical span at residues 236–260; that stretch reads LIFTIMIVYFLFWAPYNIVLLLNTY. The Extracellular segment spans residues 261–277; that stretch reads QEFFGLNNCSSSNRLDQ. The chain crosses the membrane as a helical span at residues 278 to 301; it reads AMQVTETLGMTHCCVNPIIYAFVG. The Cytoplasmic segment spans residues 302–352; the sequence is EKFRNYLKVFFQKHIAKCFCECCSIFQKEAPERANSVYTRSTGEQEISVGL. S-palmitoyl cysteine attachment occurs at residues Cys-321, Cys-323, and Cys-324. Phosphoserine; by BARK1 is present on residues Ser-337, Ser-342, and Ser-349.

Belongs to the G-protein coupled receptor 1 family. In terms of assembly, interacts with PRAF2. Efficient ligand binding to CCL3/MIP-1alpha and CCL4/MIP-1beta requires sulfation, O-glycosylation and sialic acid modifications. Glycosylation on Ser-6 is required for efficient binding of CCL4. Interacts with GRK2. Interacts with ARRB1 and ARRB2. Interacts with CNIH4. Interacts with S100A4; this interaction stimulates T-lymphocyte chemotaxis. In terms of processing, sulfated on at least 2 of the N-terminal tyrosines. Sulfation is required for efficient binding of the chemokines, CCL3 and CCL4. Post-translationally, palmitoylation in the C-terminal is important for cell surface expression. Phosphorylation on serine residues in the C-terminal is stimulated by binding CC chemokines especially by APO-RANTES. In terms of processing, O-glycosylated, but not N-glycosylated. Ser-6 appears to be the major site even if Ser-7 may be also O-glycosylated. Also sialylated glycans present which contribute to chemokine binding. Ser-17 may also be glycosylated and, if so, with small moieties such as a T-antigen.

It is found in the cell membrane. In terms of biological role, receptor for a number of inflammatory CC-chemokines including CCL3/MIP-1-alpha, CCL4/MIP-1-beta and RANTES and subsequently transduces a signal by increasing the intracellular calcium ion level. May play a role in the control of granulocytic lineage proliferation or differentiation. Participates in T-lymphocyte migration to the infection site by acting as a chemotactic receptor. The protein is C-C chemokine receptor type 5 (CCR5) of Mico humeralifer (Black and white tassel-ear marmoset).